The sequence spans 521 residues: Bifunctional purine biosynthesis protein PurH (521 aa).

One can recognise an MGS-like domain in the interval 1-149 (MSDPVIKRAL…KNNESVTVVT (149 aa)).

The protein belongs to the PurH family.

The enzyme catalyses (6R)-10-formyltetrahydrofolate + 5-amino-1-(5-phospho-beta-D-ribosyl)imidazole-4-carboxamide = 5-formamido-1-(5-phospho-D-ribosyl)imidazole-4-carboxamide + (6S)-5,6,7,8-tetrahydrofolate. The catalysed reaction is IMP + H2O = 5-formamido-1-(5-phospho-D-ribosyl)imidazole-4-carboxamide. The protein operates within purine metabolism; IMP biosynthesis via de novo pathway; 5-formamido-1-(5-phospho-D-ribosyl)imidazole-4-carboxamide from 5-amino-1-(5-phospho-D-ribosyl)imidazole-4-carboxamide (10-formyl THF route): step 1/1. It participates in purine metabolism; IMP biosynthesis via de novo pathway; IMP from 5-formamido-1-(5-phospho-D-ribosyl)imidazole-4-carboxamide: step 1/1. This is Bifunctional purine biosynthesis protein PurH from Chlorobium phaeobacteroides (strain DSM 266 / SMG 266 / 2430).